Here is a 797-residue protein sequence, read N- to C-terminus: Peroxisome proliferator-activated receptor gamma coactivator 1-alpha (797 aa).

N6-acetyllysine is present on Lys-77. Residues 101–138 (EDGLPSFDALTDGAVTTDNEASPSSMPDGTPPPQEAEE) form a disordered region. Residues 114–127 (AVTTDNEASPSSMP) show a composition bias toward polar residues. The LXXLL motif signature appears at 142–146 (LKKLL). Lys-144 bears the N6-acetyllysine mark. Thr-177 carries the phosphothreonine; by AMPK modification. N6-acetyllysine is present on Lys-183. The segment at 212–276 (YLTTNDDPPH…NDPKGSPFEN (65 aa)) is disordered. Over residues 218-236 (DPPHTKPTENRNSSRDKCA) the composition is skewed to basic and acidic residues. Positions 243–259 (TQPQSQHAQAKPTTLSL) are enriched in polar residues. N6-acetyllysine is present on residues Lys-253, Lys-270, Lys-277, Lys-320, Lys-346, Lys-412, Lys-441, and Lys-450. Residues 289–376 (GTAGLTPPTT…HEERKTKRPS (88 aa)) form a disordered region. The interval 292 to 338 (GLTPPTTPPHKANQDNPFKASPKLKPSCKTVVPPPTKRARYSECSGT) is interaction with PPARG. Residues 349-797 (EQSELYAQLS…LKEAQRSLRR (449 aa)) form a mediates interaction with RNF34 region. At Ser-538 the chain carries Phosphoserine; by AMPK. 3 disordered regions span residues 543–598 (NSPC…SSRS), 612–634 (HRNS…PRYD), and 648–668 (EYRK…ERQK). Residues 562-577 (QRMRSRSRSFSRHRSC) show a composition bias toward basic residues. Residues 578 to 598 (SRSPYSRSRSRSPGSRSSSRS) show a composition bias toward low complexity. Residues 621-630 (SRSRSPYSRR) are compositionally biased toward basic residues. In terms of domain architecture, RRM spans 676-752 (RVIYVGKIRP…TDFELYFCGR (77 aa)). Lys-757 and Lys-778 each carry N6-acetyllysine.

As to quaternary structure, homooligomer. Interacts with MYBBP1A; inhibits MYBBP1A transcriptional activation. Interacts with PRDM16, LPIN1 and PML. Interacts (via LXXLL motif) with RORA and RORC (via AF-2 motif); activates RORA and RORC transcriptional activation. Interacts with LRPPRC. Interacts with FOXO1. Interacts with NR5A2. Phosphorylation by AMPK in skeletal muscle increases activation of its own promoter. Phosphorylated by CLK2. In terms of processing, heavily acetylated by KAT2A/GCN5 under conditions of high nutrients, leading to inactivation of PPARGC1A. Deacetylated by SIRT1 in low nutrients/high NAD conditions, leading to its activation. Post-translationally, ubiquitinated. Ubiquitination by RNF34 induces proteasomal degradation. White quadriceps and red tibialis anterior (TA) muscles, liver, kidney and brown adipose tissue (at protein level). Skeletal muscle, brown adipose tissue, heart, kidney and brain.

Its subcellular location is the nucleus. It localises to the PML body. Transcriptional coactivator for steroid receptors and nuclear receptors. Greatly increases the transcriptional activity of PPARG and thyroid hormone receptor on the uncoupling protein promoter. Can regulate key mitochondrial genes that contribute to the program of adaptive thermogenesis. Plays an essential role in metabolic reprogramming in response to dietary availability through coordination of the expression of a wide array of genes involved in glucose and fatty acid metabolism. Acts as a key regulator of gluconeogenesis: stimulates hepatic gluconeogenesis by increasing the expression of gluconeogenic enzymes, and acting together with FOXO1 to promote the fasting gluconeogenic program. Induces the expression of PERM1 in the skeletal muscle in an ESRRA-dependent manner. Also involved in the integration of the circadian rhythms and energy metabolism. Required for oscillatory expression of clock genes, such as BMAL1 and NR1D1, through the coactivation of RORA and RORC, and metabolic genes, such as PDK4 and PEPCK. The protein is Peroxisome proliferator-activated receptor gamma coactivator 1-alpha (Ppargc1a) of Mus musculus (Mouse).